The primary structure comprises 390 residues: F-box/kelch-repeat protein At3g06570 (390 aa).

One can recognise an F-box domain in the interval 23 to 69; it reads SASFQSLPDDLILSIVARVPRLYHRTVSLVCKSFRSLLVSPELYKAR. Kelch repeat units lie at residues 140-183, 185-234, and 236-281; these read DIYN…VLDR, IFVV…CRTA, and IDGK…QIHN.

In Arabidopsis thaliana (Mouse-ear cress), this protein is F-box/kelch-repeat protein At3g06570.